The following is a 2588-amino-acid chain: MDRTCELSRRNCLLSFSNPVNLDASEDKDSPFGNGQSNFSEPLNGCTMQLPTAASGTSQNAYGQDSPSCYIPLRRLQDLASMINVEYLSGSADGSESFQDPAKSDSRAQSPIVCTSLSPGGPTALAMKQEPTCNNSPELQLRVTKTTKNGFLHFENFTGVDDADVDSEMDPEQPVTEDESIEEIFEETQTNATCNYEPKSENGVEVAMGSEQDSMPESRHGAVERPFLPLAPQTEKQKNKQRSEVDGSNEKTALLPAPTSLGDTNVTVEEQFNSINLSFQDDPDSSPSPLGNMLEIPGTSSPSTSQELPFVPQKILSKWEASVGLAEQYDVPKGSKNQKCVSSSVKLDSEEDMPFEDCTNDPDSEHLLLNGCLKSLAFDSEHSADEKEKPCAKSRVRKSSDNIKRTSVKKDLVPFESRKEERRGKIPDNLGLDFISGGVSDKQASNELSRIANSLTGSSTAPGSFLFSSSVQNTAKTDFETPDCDSLSGLSESALISKHSGEKKKLHPGQVCSSKVQLCYVGAGDEEKRSNSVSVSTTSDDGCSDLDPTEHNSGFQNSVLGITDAFDKTENALSVHKNETQYSRYPVTNRIKEKQKSLITNSHADHLMGSTKTMEPETAELSQVNLSDLKISSPIPKPQPEFRNDGLTTKFSAPPGIRNENPLTKGGLANQTLLPLKCRQPKFRSIKCKHKESPAVAETSATSEDLSLKCCSSDTNGSPLANISKSGKGEGLKLLNNMHEKTRDSSDIETAVVKHVLSELKELSYRSLSEDVSDSGTAKASKPLLFSSASSQNHIPIEPDYKFSTLLMMLKDMHDSKTKEQRLMTAQNLASYRTPDRGDCSSGSPVGTSKVLVLGSSTPNSEKPGDSTQDSVHQSPGGGDSALSGELSSSLSSLASDKRELPACGKIRSNCIPRRNCGRAKPSSKLRETISAQMVKPSVNPKALKTERKRKFSRLPAVTLAANRLGNKESGSVNGPSRGGAEDPGKEEPLQQMDLLRNEDTHFSDVHFDSKAKQSDPDKNLEKEPSFENRKGPELGSEMNTENDELHGVNQVVPKKRWQRLNQRRPKPGKRANRFREKENSEGAFGVLLPADAVQKAREDYLEQRAPPTSKPEDSAADPNHGSHSESVAPRLNVCEKSSVGMGDVEKETGIPSLMPQTKLPEPAIRSEKKRLRKPSKWLLEYTEEYDQIFAPKKKQKKVQEQVHKVSSRCEDESLLARCQPSAQNKQVDENSLISTKEEPPVLEREAPFLEGPLAQSDLGVTHAELPQLTLSVPVAPEASPRPALESEELLVKTPGNYESKRQRKPTKKLLESNDLDPGFMPKKGDLGLSRKCFEASRSGNGIVESRATSHLKEFSGGTTKIFDKPRKRKRQRLVTARVHYKKVKKEDLTKDTPSSEGELLIHRTAASPKEILEEGVEHDPGMSASKKLQVERGGGAALKENVCQNCEKLGELLLCEAQCCGAFHLECLGLPEMPRGKFICNECHTGIHTCFVCKQSGEDVKRCLLPLCGKFYHEECVQKYPPTVTQNKGFRCPLHICITCHAANPANVSASKGRLMRCVRCPVAYHANDFCLAAGSKILASNSIICPNHFTPRRGCRNHEHVNVSWCFVCSEGGSLLCCDSCPAAFHRECLNIDIPEGNWYCNDCKAGKKPHYREIVWVKVGRYRWWPAEICHPRAVPSNIDKMRHDVGEFPVLFFGSNDYLWTHQARVFPYMEGDVSSKDKMGKGVDGTYKKALQEAAARFEELKARKELRQLQEDRKNDKKPPPYKHIKVNRPIGRVQIFTADLSEIPRCNCKATDENPCGIDSECINRMLLYECHPTVCPAGVRCQNQCFSKRQYPDVEIFRTLQRGWGLRTKTDIKKGEFVNEYVGELIDEEECRARIRYAQEHDITNFYMLTLDKDRIIDAGPKGNYARFMNHCCQPNCETQKWSVNGDTRVGLFALSDIKAGTELTFNYNLECLGNGKTVCKCGAPNCSGFLGVRPKNQPIVTEEKSRKFKRKPHGKRRSQGEVTKEREDECFSCGDAGQLVSCKKPGCPKVYHADCLNLTKRPAGKWECPWHQCDVCGKEAASFCEMCPSSFCKQHREGMLFISKLDGRLSCTEHDPCGPNPLEPGEIREYVPPTATSPPSPGTQPKEQSSEMATQGPKKSDQPPTDATQLLPLSKKALTGSCQRPLLPERPPERTDSSSHLLDRIRDLAGSGTKSQSLVSSQRPQDRPPAKEGPRPQPPDRASPMTRPSSSPSVSSLPLERPLRMTDSRLDKSIGAASPKSQAVEKTPASTGLRLSSPDRLLTTNSPKPQISDRPPEKSHASLTQRLPPPEKVLSAVVQSLVAKEKALRPVDQNTQSKHRPAVVMDLIDLTPRQKERAASPQEVTPQADEKTAMLESSSWPSSKGLGHIPRATEKISVSESLQPSGKVAAPSEHPWQAVKSLTHARFLSPPSAKAFLYESATQASGRTPVGAEQTPGPPSPAPGLVKQVKQLSRGLTAKSGQSFRSLGKISASLPNEEKKLTTTEQSPWGLGKASPGAGLWPIVAGQTLAQACWSAGGTQTLAQTCWSLGRGQDPKPENAIQALNQAPSSRKCADSEKK.

Residues Ser110 and Ser118 each carry the phosphoserine modification. 2 disordered regions span residues 209–264 and 277–307; these read GSEQ…LGDT and LSFQ…TSQE. The segment covering 235–249 has biased composition (basic and acidic residues); that stretch reads EKQKNKQRSEVDGSN. Positions 298–307 are enriched in polar residues; the sequence is GTSSPSTSQE. Residues Ser380 and Ser383 each carry the phosphoserine modification. Residues 383 to 403 form a disordered region; sequence SADEKEKPCAKSRVRKSSDNI. A Glycyl lysine isopeptide (Lys-Gly) (interchain with G-Cter in SUMO2) cross-link involves residue Lys802. Disordered regions lie at residues 830–899, 947–987, and 1008–1133; these read ASYR…SDKR, ERKR…PGKE, and FDSK…PRLN. Positions 855-874 are enriched in polar residues; it reads GSSTPNSEKPGDSTQDSVHQ. Over residues 881-895 the composition is skewed to low complexity; the sequence is SALSGELSSSLSSLA. A compositionally biased stretch (basic and acidic residues) spans 1008–1033; the sequence is FDSKAKQSDPDKNLEKEPSFENRKGP. Residues 1054 to 1073 are compositionally biased toward basic residues; the sequence is PKKRWQRLNQRRPKPGKRAN. Lys1237 participates in a covalent cross-link: Glycyl lysine isopeptide (Lys-Gly) (interchain with G-Cter in SUMO2). Positions 1279–1324 are disordered; sequence ASPRPALESEELLVKTPGNYESKRQRKPTKKLLESNDLDPGFMPKK. Ser1408 is modified (phosphoserine). 3 PHD-type zinc fingers span residues 1441 to 1487, 1488 to 1544, and 1605 to 1649; these read ENVC…CHTG, IHTC…CHAA, and VSWC…CKAG. The PWWP domain occupies 1654–1716; the sequence is YREIVWVKVG…QARVFPYMEG (63 aa). The AWS domain occupies 1788-1838; sequence SEIPRCNCKATDENPCGIDSECINRMLLYECHPTVCPAGVRCQNQCFSKRQ. In terms of domain architecture, SET spans 1840 to 1957; that stretch reads PDVEIFRTLQ…AGTELTFNYN (118 aa). Residues 1850–1852, 1892–1895, 1918–1919, Asn1963, and Lys1969 contribute to the S-adenosyl-L-methionine site; these read RGW, TNFY, and NH. Positions 1958–1964 are inhibits enzyme activity in the absence of bound histone; that stretch reads LECLGNG. A Post-SET domain is found at 1964 to 1980; sequence GKTVCKCGAPNCSGFLG. The segment at 1989-2010 is disordered; the sequence is VTEEKSRKFKRKPHGKRRSQGE. The segment covering 1995–2006 has biased composition (basic residues); that stretch reads RKFKRKPHGKRR. The PHD-type 4; atypical zinc-finger motif lies at 2016–2063; that stretch reads EDECFSCGDAGQLVSCKKPGCPKVYHADCLNLTKRPAGKWECPWHQCD. Disordered regions lie at residues 2105–2320, 2333–2423, 2447–2521, and 2560–2588; these read PCGP…PPPE, KEKA…PSEH, YESA…WGLG, and RGQD…SEKK. Over residues 2179–2196 the composition is skewed to basic and acidic residues; it reads RPPERTDSSSHLLDRIRD. Polar residues predominate over residues 2201-2212; the sequence is GTKSQSLVSSQR. The segment covering 2213–2223 has biased composition (basic and acidic residues); that stretch reads PQDRPPAKEGP. Residues 2232–2249 show a composition bias toward low complexity; sequence SPMTRPSSSPSVSSLPLE. Residues 2250–2261 show a composition bias toward basic and acidic residues; that stretch reads RPLRMTDSRLDK. Residue Ser2267 is modified to Phosphoserine. Position 2360 is a phosphothreonine (Thr2360). Position 2369 is a phosphoserine (Ser2369). A Glycyl lysine isopeptide (Lys-Gly) (interchain with G-Cter in SUMO2) cross-link involves residue Lys2509.

The protein belongs to the class V-like SAM-binding methyltransferase superfamily. In terms of assembly, interacts with AR DNA- and ligand-binding domains. Interacts with the ligand-binding domains of RARA and THRA in the absence of ligand; in the presence of ligand the interaction is severely disrupted but some binding still occurs. Interacts with the ligand-binding domains of RXRA and ESRRA only in the presence of ligand. Interacts with ZNF496. In terms of tissue distribution, expressed in the embryo and the outer region of the uterine decidua at early post-implantation 5.5 dpc stage. Uniformly expressed in embryonic and extraembryonic tissues during gastrulation stage 7.5 dpc. Expressed differentially after stage 14.5 dpc with highest expression in proliferating cells. Enriched in the telencephalic region of the brain, spinal cord, intestinal crypt, tooth buds, thymus and salivary glands at stage 16.5 dpc. Also expressed in the ossification region of developing bones and in the periosteum.

The protein localises to the nucleus. The protein resides in the chromosome. The enzyme catalyses L-lysyl(36)-[histone H3] + 2 S-adenosyl-L-methionine = N(6),N(6)-dimethyl-L-lysyl(36)-[histone H3] + 2 S-adenosyl-L-homocysteine + 2 H(+). Its function is as follows. Histone methyltransferase that dimethylates Lys-36 of histone H3 (H3K36me2). Transcriptional intermediary factor capable of negatively influencing transcription. May also positively influence transcription. Essential for early post-implantation development. This is Histone-lysine N-methyltransferase, H3 lysine-36 specific from Mus musculus (Mouse).